We begin with the raw amino-acid sequence, 892 residues long: MEINHDYRVKLFDELSFERKQCTECNQWFWTLDKDRTTCGDSPCDEYSFIGSPITSKKYTYNEMVKEFTNFFAEKGHSPVKRSPVVAKRWRDDILLTIASIAVFQPWVTNGLVKPVKNPLVIAQPCIRLNDIDNVGRTGRHLTCFTMGAHHAFNSKDEYKYWTDKTVEYCFELMQRLGIDGKTITFIESWWEGGGNAGPCYEVITHGVELATLVFMQYKKVGNDYEEIPLKIVDTGYGIERFAWASQGTPTVYESLFSEIIEKLKEDAGIPEVDEKIMAESATLAGLMDIENVGDLRVLRQKVAEKIGMDVDELDKLISPLEYIYAIADHTRCLSFMFGDGIVPSNVKEGYLARLVLRKTLRYMEKIGISMSIKDIIAMQLENMKEIYPELSEMKEYVMDVLDAEEKKYIQTVNRGRGIVERMAASKSEITLDDLIELYDSNGLPPEIVKDVVDELNKKGKKTIAITVPDNFYTIVAERHEEEKPEEVVSTKKELPELEVSETELLFFKHPTQAEFEAKILKIAEKYVVLDKTLFYAEGGGQKYDIGQLNDIEVSDVQKKNGIVFHKVSDISKFKEGDTVKGTLNWENRLKLMRNHTATHVINAAATRVLGKHIWQTGSNVDTEKGRLDITHYERISREQVKEIERIANEMVLSKMPVNSTFMDRNDAEQKYGFTIYQGGVVPGDTLRIIEIEETDVEACGGTHCSNTSEVGYIKVLKTERIQDGVERLEYSTGMGSVSEIAIIEDTLIDSAEILGIPNDQLPKTVKRFFEEWKEQKKTIEELQKKVGELVKYELADKFEKVGDYEVLVEQVSGTPNELMSIADNLAVGNKLIVLMNESDYLLCKRGENVELSMKELIRNIGKGGGKDNLAQGKYSETKEQITEKISQILNK.

Zn(2+) contacts are provided by His-596, His-600, Cys-700, and His-704.

Belongs to the class-II aminoacyl-tRNA synthetase family. It depends on Zn(2+) as a cofactor.

It localises to the cytoplasm. It carries out the reaction tRNA(Ala) + L-alanine + ATP = L-alanyl-tRNA(Ala) + AMP + diphosphate. In terms of biological role, catalyzes the attachment of alanine to tRNA(Ala) in a two-step reaction: alanine is first activated by ATP to form Ala-AMP and then transferred to the acceptor end of tRNA(Ala). Also edits incorrectly charged Ser-tRNA(Ala) and Gly-tRNA(Ala) via its editing domain. The chain is Alanine--tRNA ligase from Methanococcus maripaludis (strain C6 / ATCC BAA-1332).